The sequence spans 379 residues: Cytochrome b (379 aa).

The next 4 membrane-spanning stretches (helical) occupy residues 33-53, 77-98, 113-133, and 178-198; these read FGSLLGMCLVIQILTGLFLAM, WLIRYLHANGASMFFICLFIHV, WNIGIILLLTTMATAFVGYVL, and FFAFHFILPFIIAAFALVHLL. Heme b is bound by residues His83 and His97. 2 residues coordinate heme b: His182 and His196. Position 201 (His201) interacts with a ubiquinone. Helical transmembrane passes span 226–246, 288–308, 320–340, and 347–367; these read TKDLLGIFLLLLVLMILALFF, LGGVLALVLSILILATFPLLN, VTQVIYWIFIANLLVLTWIGG, and FTTIGQIASITYFTIIIILIP.

Belongs to the cytochrome b family. The cytochrome bc1 complex contains 11 subunits: 3 respiratory subunits (MT-CYB, CYC1 and UQCRFS1), 2 core proteins (UQCRC1 and UQCRC2) and 6 low-molecular weight proteins (UQCRH/QCR6, UQCRB/QCR7, UQCRQ/QCR8, UQCR10/QCR9, UQCR11/QCR10 and a cleavage product of UQCRFS1). This cytochrome bc1 complex then forms a dimer. The cofactor is heme b.

It localises to the mitochondrion inner membrane. Functionally, component of the ubiquinol-cytochrome c reductase complex (complex III or cytochrome b-c1 complex) that is part of the mitochondrial respiratory chain. The b-c1 complex mediates electron transfer from ubiquinol to cytochrome c. Contributes to the generation of a proton gradient across the mitochondrial membrane that is then used for ATP synthesis. This Akodon mystax (Caparao grass mouse) protein is Cytochrome b (MT-CYB).